The following is a 490-amino-acid chain: ATP synthase subunit beta, chloroplastic (490 aa).

Phosphothreonine is present on Thr-6. At Ser-13 the chain carries Phosphoserine. ATP is bound at residue 172–179 (GGAGVGKT).

This sequence belongs to the ATPase alpha/beta chains family. In terms of assembly, F-type ATPases have 2 components, CF(1) - the catalytic core - and CF(0) - the membrane proton channel. CF(1) has five subunits: alpha(3), beta(3), gamma(1), delta(1), epsilon(1). CF(0) has four main subunits: a(1), b(1), b'(1) and c(9-12).

Its subcellular location is the plastid. It localises to the chloroplast thylakoid membrane. It carries out the reaction ATP + H2O + 4 H(+)(in) = ADP + phosphate + 5 H(+)(out). Produces ATP from ADP in the presence of a proton gradient across the membrane. The catalytic sites are hosted primarily by the beta subunits. The sequence is that of ATP synthase subunit beta, chloroplastic from Aethionema grandiflorum (Persian stone-cress).